Consider the following 284-residue polypeptide: 2-dehydro-3-deoxyphosphooctonate aldolase (284 aa).

It belongs to the KdsA family.

It is found in the cytoplasm. The enzyme catalyses D-arabinose 5-phosphate + phosphoenolpyruvate + H2O = 3-deoxy-alpha-D-manno-2-octulosonate-8-phosphate + phosphate. Its pathway is carbohydrate biosynthesis; 3-deoxy-D-manno-octulosonate biosynthesis; 3-deoxy-D-manno-octulosonate from D-ribulose 5-phosphate: step 2/3. The protein operates within bacterial outer membrane biogenesis; lipopolysaccharide biosynthesis. The protein is 2-dehydro-3-deoxyphosphooctonate aldolase of Cronobacter sakazakii (strain ATCC BAA-894) (Enterobacter sakazakii).